We begin with the raw amino-acid sequence, 464 residues long: ATP-dependent protease ATPase subunit HslU (464 aa).

Residues Val18, 60–65 (GVGKTE), Asp277, Glu342, and Arg414 each bind ATP.

The protein belongs to the ClpX chaperone family. HslU subfamily. As to quaternary structure, a double ring-shaped homohexamer of HslV is capped on each side by a ring-shaped HslU homohexamer. The assembly of the HslU/HslV complex is dependent on binding of ATP.

Its subcellular location is the cytoplasm. Its function is as follows. ATPase subunit of a proteasome-like degradation complex; this subunit has chaperone activity. The binding of ATP and its subsequent hydrolysis by HslU are essential for unfolding of protein substrates subsequently hydrolyzed by HslV. HslU recognizes the N-terminal part of its protein substrates and unfolds these before they are guided to HslV for hydrolysis. The chain is ATP-dependent protease ATPase subunit HslU from Lactobacillus delbrueckii subsp. bulgaricus (strain ATCC 11842 / DSM 20081 / BCRC 10696 / JCM 1002 / NBRC 13953 / NCIMB 11778 / NCTC 12712 / WDCM 00102 / Lb 14).